A 246-amino-acid polypeptide reads, in one-letter code: Probable aquaporin AqpM (246 aa).

Residues 1–12 (MTMTLAKRFTAE) lie on the Cytoplasmic side of the membrane. A helical transmembrane segment spans residues 13-33 (VVGTFILVFFGPGAAVITLMI). Residues 34–56 (ANGADKPNEFNIGIGALGGLGDW) lie on the Extracellular side of the membrane. Residues 57–77 (FAIGMAFALAIAAVIYSLGRI) form a helical membrane-spanning segment. At 78 to 104 (SGAHINPAVTIALWSIGRFPGREVVPY) the chain is on the cytoplasmic side. The NPA 1 motif lies at 83–85 (NPA). Residues 105–125 (IVAQFIGAALGSLLFLACVGP) traverse the membrane as a helical segment. Topologically, residues 126 to 146 (AAATVGGLGATAPFPGIGYGQ) are extracellular. The helical transmembrane segment at 147 to 167 (AILTEAIGTFLLMLVIMGVAV) threads the bilayer. The Cytoplasmic portion of the chain corresponds to 168–173 (DERAPP). A helical transmembrane segment spans residues 174 to 194 (GFAGLVIGLTVGGIITTIGNI). The Extracellular segment spans residues 195–217 (TGSSLNPARTFGPYLGDSLMGIN). The NPA 2 signature appears at 200–202 (NPA). The helical transmembrane segment at 218-238 (LWQYFPIYVIGPIVGAVAAAW) threads the bilayer. Residues 239–246 (LYNYLAKE) are Cytoplasmic-facing.

It belongs to the MIP/aquaporin (TC 1.A.8) family.

It is found in the cell membrane. Functionally, channel that permits osmotically driven movement of water in both directions. The polypeptide is Probable aquaporin AqpM (aqpM) (Archaeoglobus fulgidus (strain ATCC 49558 / DSM 4304 / JCM 9628 / NBRC 100126 / VC-16)).